Here is a 992-residue protein sequence, read N- to C-terminus: UPF0182 protein BCG_3215c (992 aa).

The next 7 helical transmembrane spans lie at 18-38, 63-83, 113-133, 175-195, 210-230, 259-279, and 287-307; these read ILIM…RLID, IVVC…GLAL, LVGI…AQSY, LVSV…FGGI, VQLV…YWLD, KLIL…AIAL, and IGLV…PLIV. Positions 906-938 are disordered; it reads PTEAAVPPSPAANPPPPASGPQPPPVTAAPPVP. A compositionally biased stretch (pro residues) spans 912-938; it reads PPSPAANPPPPASGPQPPPVTAAPPVP.

It belongs to the UPF0182 family.

It localises to the cell membrane. The polypeptide is UPF0182 protein BCG_3215c (Mycobacterium bovis (strain BCG / Pasteur 1173P2)).